The following is a 90-amino-acid chain: Probable Fe(2+)-trafficking protein (90 aa).

This sequence belongs to the Fe(2+)-trafficking protein family.

Functionally, could be a mediator in iron transactions between iron acquisition and iron-requiring processes, such as synthesis and/or repair of Fe-S clusters in biosynthetic enzymes. In Laribacter hongkongensis (strain HLHK9), this protein is Probable Fe(2+)-trafficking protein.